A 311-amino-acid chain; its full sequence is Formimidoylglutamase (311 aa).

Residues His122, Asp151, His153, Asp155, Cys242, and Asp244 each coordinate Mn(2+).

The protein belongs to the arginase family. The cofactor is Mn(2+).

It carries out the reaction N-formimidoyl-L-glutamate + H2O = formamide + L-glutamate. It functions in the pathway amino-acid degradation; L-histidine degradation into L-glutamate; L-glutamate from N-formimidoyl-L-glutamate (hydrolase route): step 1/1. Its function is as follows. Catalyzes the conversion of N-formimidoyl-L-glutamate to L-glutamate and formamide. The chain is Formimidoylglutamase from Pseudomonas aeruginosa (strain UCBPP-PA14).